Consider the following 570-residue polypeptide: Proline--tRNA ligase (570 aa).

It belongs to the class-II aminoacyl-tRNA synthetase family. ProS type 1 subfamily. As to quaternary structure, homodimer.

Its subcellular location is the cytoplasm. It catalyses the reaction tRNA(Pro) + L-proline + ATP = L-prolyl-tRNA(Pro) + AMP + diphosphate. In terms of biological role, catalyzes the attachment of proline to tRNA(Pro) in a two-step reaction: proline is first activated by ATP to form Pro-AMP and then transferred to the acceptor end of tRNA(Pro). As ProRS can inadvertently accommodate and process non-cognate amino acids such as alanine and cysteine, to avoid such errors it has two additional distinct editing activities against alanine. One activity is designated as 'pretransfer' editing and involves the tRNA(Pro)-independent hydrolysis of activated Ala-AMP. The other activity is designated 'posttransfer' editing and involves deacylation of mischarged Ala-tRNA(Pro). The misacylated Cys-tRNA(Pro) is not edited by ProRS. In Shewanella sp. (strain MR-7), this protein is Proline--tRNA ligase.